We begin with the raw amino-acid sequence, 804 residues long: Probable basic-leucine zipper transcription factor C (804 aa).

Disordered regions lie at residues 86 to 148 and 275 to 371; these read FISP…NDIN and YGNV…PKKR. Low complexity predominate over residues 90–145; the sequence is NNNNNNNNNNNNNNNNNNNNNNNNNNNNNNNNNNNNNNNNNNNNNNNNNNNNNNNN. The span at 275 to 291 shows a compositional bias: polar residues; that stretch reads YGNVSDNSSPETNFSYA. Low complexity predominate over residues 292–334; it reads SPSSPSSTQSQSSPYEQQPLSPNPTISLSSSISVTATTTTRPN. The segment covering 335-356 has biased composition (basic and acidic residues); sequence ATEKTKESSLKSKSKSNEKDKE. A bZIP domain is found at 415-478; sequence ALNYQFRKIK…DQYKLQEKQK (64 aa). Residues 421–436 form a basic motif region; sequence RKIKNRESARRSRERK. The interval 443–450 is leucine-zipper; it reads LEAKIAEI. A disordered region spans residues 670-693; the sequence is KNCNNNNENNNNNDNNKNSDDEKG. Low complexity predominate over residues 672-685; that stretch reads CNNNNENNNNNDNN.

This sequence belongs to the bZIP family.

The protein localises to the nucleus. Probable transcriptional regulator. This chain is Probable basic-leucine zipper transcription factor C (bzpC), found in Dictyostelium discoideum (Social amoeba).